Consider the following 338-residue polypeptide: Glycerol-3-phosphate dehydrogenase [NAD(P)+] (338 aa).

Serine 14, tyrosine 15, histidine 35, and lysine 109 together coordinate NADPH. Lysine 109, glycine 138, and threonine 140 together coordinate sn-glycerol 3-phosphate. Residue alanine 142 coordinates NADPH. Residues lysine 194, aspartate 247, serine 257, arginine 258, and asparagine 259 each contribute to the sn-glycerol 3-phosphate site. Lysine 194 functions as the Proton acceptor in the catalytic mechanism. Arginine 258 provides a ligand contact to NADPH. NADPH is bound by residues valine 282 and glutamate 284.

This sequence belongs to the NAD-dependent glycerol-3-phosphate dehydrogenase family.

The protein localises to the cytoplasm. It carries out the reaction sn-glycerol 3-phosphate + NAD(+) = dihydroxyacetone phosphate + NADH + H(+). The enzyme catalyses sn-glycerol 3-phosphate + NADP(+) = dihydroxyacetone phosphate + NADPH + H(+). It functions in the pathway membrane lipid metabolism; glycerophospholipid metabolism. Its function is as follows. Catalyzes the reduction of the glycolytic intermediate dihydroxyacetone phosphate (DHAP) to sn-glycerol 3-phosphate (G3P), the key precursor for phospholipid synthesis. The polypeptide is Glycerol-3-phosphate dehydrogenase [NAD(P)+] (Shewanella baltica (strain OS185)).